The chain runs to 200 residues: Probable molybdenum cofactor guanylyltransferase (200 aa).

GTP contacts are provided by residues 9–11 (LAG), Lys21, Asp69, and Asp100. Mg(2+) is bound at residue Asp100.

It belongs to the MobA family. Requires Mg(2+) as cofactor.

It is found in the cytoplasm. It catalyses the reaction Mo-molybdopterin + GTP + H(+) = Mo-molybdopterin guanine dinucleotide + diphosphate. In terms of biological role, transfers a GMP moiety from GTP to Mo-molybdopterin (Mo-MPT) cofactor (Moco or molybdenum cofactor) to form Mo-molybdopterin guanine dinucleotide (Mo-MGD) cofactor. This chain is Probable molybdenum cofactor guanylyltransferase, found in Bacillus cereus (strain AH820).